The chain runs to 73 residues: Beta-defensin 50 (73 aa).

The N-terminal stretch at 1-23 (MKTLCFLLLTSGLLYLMVKGVGS) is a signal peptide. 2 cysteine pairs are disulfide-bonded: Cys-34–Cys-63 and Cys-46–Cys-64.

The protein belongs to the beta-defensin family. Highly expressed in prostate. Not expressed in uterus, epididymis, ovary, testis, spleen, submaxillary gland, thymus, thyroid, pancreas, smooth muscle, skeletal muscle, heart, kidney, lung, liver, eye and brain.

It localises to the secreted. Has bactericidal activity. The chain is Beta-defensin 50 (Defb50) from Mus musculus (Mouse).